The sequence spans 686 residues: Putative xyloglucan glycosyltransferase 10 (686 aa).

Helical transmembrane passes span 114–134 (LYAF…VELA) and 160–180 (AAYV…LFLV). Residue Asp267 is part of the active site. Positions 326 and 328 each coordinate substrate. The active site involves Asp420. 4 helical membrane-spanning segments follow: residues 498–518 (LILP…TMFI), 523–543 (LPDW…ILPA), 640–656 (ELAL…RSLL), and 661–681 (IHFY…LDLI).

Belongs to the glycosyltransferase 2 family. Plant cellulose synthase-like C subfamily.

It localises to the golgi apparatus membrane. Probable beta-1,4-glucan synthase rather involved in the synthesis of the xyloglucan backbone than cellulose. Seems to work simultaneously with xyloglucan 6-xylosyltransferase. Xyloglucan is a noncellulosic polysaccharides of plant cell wall and consists of a glucan backbone substituted by xylose, galactose and fucose. This Oryza sativa subsp. indica (Rice) protein is Putative xyloglucan glycosyltransferase 10 (CSLC10).